Here is a 625-residue protein sequence, read N- to C-terminus: Chaperone protein HtpG (625 aa).

Positions 1–332 (MSNKQNTAVQ…TEDLSLNVSR (332 aa)) are a; substrate-binding. The tract at residues 333 to 545 (EIVQSSPVMS…KDAMDSQMER (213 aa)) is b. The c stretch occupies residues 546-625 (MMKMMQQEMP…ELIEAATLSR (80 aa)).

It belongs to the heat shock protein 90 family. Homodimer.

The protein resides in the cytoplasm. Molecular chaperone. Has ATPase activity. This is Chaperone protein HtpG from Chlorobium luteolum (strain DSM 273 / BCRC 81028 / 2530) (Pelodictyon luteolum).